The following is a 985-amino-acid chain: Thioredoxin domain-containing protein 11 (985 aa).

Positions 1 to 11 are enriched in gly residues; the sequence is MSECGGRGGGS. The tract at residues 1–38 is disordered; it reads MSECGGRGGGSSSSEDAEDEGGGGGGPAGSDCLSSSPT. Positions 29-38 are enriched in low complexity; that stretch reads GSDCLSSSPT. Residues 65 to 85 traverse the membrane as a helical segment; that stretch reads LLCGAVALGCALLLALKFTCS. The region spanning 92 to 214 is the Thioredoxin 1 domain; sequence IPAKPPVSFF…IEKFVRRVMK (123 aa). Intrachain disulfides connect Cys-469–Cys-472 and Cys-719–Cys-722. The Thioredoxin 2 domain occupies 649–799; that stretch reads LDPKQALMKL…LLRFILHHSD (151 aa). Positions 821 to 919 form a coiled coil; the sequence is VLQRGHISHL…ASENLLTENT (99 aa). Ser-828 is modified (phosphoserine). The segment at 935 to 985 is disordered; the sequence is RDGAESLAAQREVHPKQPEPSATPQLPGSSPPPANVSATLVSERNKENRTD.

It belongs to the protein disulfide isomerase family. As to quaternary structure, interacts with the cytoplasmic part of DUOX1 and DUOX2. Interacts with TPO and CYBA. As to expression, widely expressed at low level. Expressed at higher level in thyroid and prostate.

Its subcellular location is the endoplasmic reticulum membrane. In terms of biological role, may act as a redox regulator involved in DUOX proteins folding. The interaction with DUOX1 and DUOX2 suggest that it belongs to a multiprotein complex constituting the thyroid H(2)O(2) generating system. It is however not sufficient to assist DUOX1 and DUOX2 in H(2)O(2) generation. This chain is Thioredoxin domain-containing protein 11 (TXNDC11), found in Homo sapiens (Human).